Reading from the N-terminus, the 447-residue chain is Argininosuccinate synthase (447 aa).

ATP is bound by residues 17-25 and Ala-43; that span reads AFSGGLDTS. Position 99 (Tyr-99) interacts with L-citrulline. Gly-129 and Thr-131 together coordinate ATP. The L-aspartate site is built by Thr-131, Asn-135, and Asp-136. Asn-135 is an L-citrulline binding site. Asp-136 is a binding site for ATP. Residues Arg-139 and Ser-192 each coordinate L-citrulline. Residue Asp-194 participates in ATP binding. Thr-201, Glu-203, and Glu-280 together coordinate L-citrulline.

This sequence belongs to the argininosuccinate synthase family. Type 2 subfamily. In terms of assembly, homotetramer.

The protein localises to the cytoplasm. It carries out the reaction L-citrulline + L-aspartate + ATP = 2-(N(omega)-L-arginino)succinate + AMP + diphosphate + H(+). It functions in the pathway amino-acid biosynthesis; L-arginine biosynthesis; L-arginine from L-ornithine and carbamoyl phosphate: step 2/3. This chain is Argininosuccinate synthase, found in Escherichia coli O1:K1 / APEC.